Consider the following 72-residue polypeptide: Translation initiation factor IF-1 (72 aa).

Positions 1-72 (MSKSDYIELE…TKGRIIFRHK (72 aa)) constitute an S1-like domain.

This sequence belongs to the IF-1 family. In terms of assembly, component of the 30S ribosomal translation pre-initiation complex which assembles on the 30S ribosome in the order IF-2 and IF-3, IF-1 and N-formylmethionyl-tRNA(fMet); mRNA recruitment can occur at any time during PIC assembly.

Its subcellular location is the cytoplasm. In terms of biological role, one of the essential components for the initiation of protein synthesis. Stabilizes the binding of IF-2 and IF-3 on the 30S subunit to which N-formylmethionyl-tRNA(fMet) subsequently binds. Helps modulate mRNA selection, yielding the 30S pre-initiation complex (PIC). Upon addition of the 50S ribosomal subunit IF-1, IF-2 and IF-3 are released leaving the mature 70S translation initiation complex. The sequence is that of Translation initiation factor IF-1 from Ruthia magnifica subsp. Calyptogena magnifica.